Here is a 360-residue protein sequence, read N- to C-terminus: Phospho-N-acetylmuramoyl-pentapeptide-transferase (360 aa).

Helical transmembrane passes span 26–46, 72–92, 94–114, 132–152, 168–188, 199–219, 236–256, 263–283, 288–308, and 338–358; these read AIVS…RMIA, PTMG…LWAY, SNPY…VGFV, WKYF…YMIG, VMPQ…VGTS, GLAI…AWAT, AGEL…FLWF, VFMG…IAVL, FLLV…ILQV, and VIVR…ATLK.

This sequence belongs to the glycosyltransferase 4 family. MraY subfamily. Mg(2+) serves as cofactor.

Its subcellular location is the cell inner membrane. The enzyme catalyses UDP-N-acetyl-alpha-D-muramoyl-L-alanyl-gamma-D-glutamyl-meso-2,6-diaminopimeloyl-D-alanyl-D-alanine + di-trans,octa-cis-undecaprenyl phosphate = di-trans,octa-cis-undecaprenyl diphospho-N-acetyl-alpha-D-muramoyl-L-alanyl-D-glutamyl-meso-2,6-diaminopimeloyl-D-alanyl-D-alanine + UMP. The protein operates within cell wall biogenesis; peptidoglycan biosynthesis. In terms of biological role, catalyzes the initial step of the lipid cycle reactions in the biosynthesis of the cell wall peptidoglycan: transfers peptidoglycan precursor phospho-MurNAc-pentapeptide from UDP-MurNAc-pentapeptide onto the lipid carrier undecaprenyl phosphate, yielding undecaprenyl-pyrophosphoryl-MurNAc-pentapeptide, known as lipid I. In Erwinia tasmaniensis (strain DSM 17950 / CFBP 7177 / CIP 109463 / NCPPB 4357 / Et1/99), this protein is Phospho-N-acetylmuramoyl-pentapeptide-transferase.